Reading from the N-terminus, the 300-residue chain is MERKLHLPAKPERHRRFGSVEAVKGIKPTDKEQMKDIQNTPNDYFFDIDHVGVSNVSHPILIASSLKPFTQTTIGAFSFTTSLARDRKGINMSRLTEQLQRYHEANWTVDFHTLKDFAKDLAGNMEQESASVSVSFPWYFERISPETKLSGLMHADIHMTVSYHENKGFSQTAGITAHATTLCPCSKEISEYSAHNQRGIIKITAHINEQAEMPDDFKAELLAAAETNASAKLHPVLKRPDEKRVTEQAYENPRFVEDVLRLTAADLYEMDWISAFEIECRNEESIHLHDAVARLSFSKC.

The protein belongs to the GTP cyclohydrolase IV family.

It carries out the reaction GTP + H2O = 7,8-dihydroneopterin 3'-triphosphate + formate + H(+). Its pathway is cofactor biosynthesis; 7,8-dihydroneopterin triphosphate biosynthesis; 7,8-dihydroneopterin triphosphate from GTP: step 1/1. Its function is as follows. Converts GTP to 7,8-dihydroneopterin triphosphate. The sequence is that of GTP cyclohydrolase FolE2 from Bacillus licheniformis (strain ATCC 14580 / DSM 13 / JCM 2505 / CCUG 7422 / NBRC 12200 / NCIMB 9375 / NCTC 10341 / NRRL NRS-1264 / Gibson 46).